Reading from the N-terminus, the 377-residue chain is MKEGSFVELSEYKHLIEEMQSAVDDFRGSLDLDALNESIQENEARMAEPGFWDDQAAAQKVIDENNVLKGKYDTFKQLADEVGDLAVAYELLSEEPDAEMQAEFETDFQHAEHDLQQYRLNLLLDGPYDRNNAILEIHPGAGGTESQDWGAMLLRMYTRWAASHNFKVETVDYQAGDEAGIKSVTLLISGHNAYGYLRSEKGVHRLVRISPFDAAGRRHTSFASVDVMPELDDTVDVDIRPEDLKIDVYRASGAGGQHVNKTSSAVRITHVPTGIVVASQAQRSQLQNRQTALNMLRAKLYEREEEKKAKERAAIQGEQMDIGWGSQIRSYVFHPYTMVKDHRTNYESHHGQAVMDGDLDPFMDAYLQWKLAQRNPQ.

At glutamine 257 the chain carries N5-methylglutamine.

It belongs to the prokaryotic/mitochondrial release factor family. Methylated by PrmC. Methylation increases the termination efficiency of RF2.

Its subcellular location is the cytoplasm. In terms of biological role, peptide chain release factor 2 directs the termination of translation in response to the peptide chain termination codons UGA and UAA. The protein is Peptide chain release factor 2 of Lactiplantibacillus plantarum (strain ATCC BAA-793 / NCIMB 8826 / WCFS1) (Lactobacillus plantarum).